The following is a 443-amino-acid chain: tRNA modification GTPase MnmE (443 aa).

The (6S)-5-formyl-5,6,7,8-tetrahydrofolate site is built by Arg19, Glu78, and Lys118. Positions 214 to 366 (GFKIAIIGPT…LISKIKNKLK (153 aa)) constitute a TrmE-type G domain. Asn224 is a K(+) binding site. Residues 224-229 (NAGKSS), 243-249 (SEIAGTT), and 268-271 (DTAG) contribute to the GTP site. Ser228 lines the Mg(2+) pocket. Residues Ser243, Ile245, and Thr248 each coordinate K(+). Position 249 (Thr249) interacts with Mg(2+). Lys443 contributes to the (6S)-5-formyl-5,6,7,8-tetrahydrofolate binding site.

This sequence belongs to the TRAFAC class TrmE-Era-EngA-EngB-Septin-like GTPase superfamily. TrmE GTPase family. In terms of assembly, homodimer. Heterotetramer of two MnmE and two MnmG subunits. K(+) serves as cofactor.

It localises to the cytoplasm. Functionally, exhibits a very high intrinsic GTPase hydrolysis rate. Involved in the addition of a carboxymethylaminomethyl (cmnm) group at the wobble position (U34) of certain tRNAs, forming tRNA-cmnm(5)s(2)U34. This chain is tRNA modification GTPase MnmE, found in Pelagibacter ubique (strain HTCC1062).